Here is a 222-residue protein sequence, read N- to C-terminus: Pyrrolidone-carboxylate peptidase (222 aa).

Active-site residues include Glu-80, Cys-146, and His-170.

It belongs to the peptidase C15 family. As to quaternary structure, homotetramer.

The protein localises to the cytoplasm. The enzyme catalyses Release of an N-terminal pyroglutamyl group from a polypeptide, the second amino acid generally not being Pro.. Functionally, removes 5-oxoproline from various penultimate amino acid residues except L-proline. This chain is Pyrrolidone-carboxylate peptidase, found in Mycobacterium tuberculosis (strain ATCC 25177 / H37Ra).